A 284-amino-acid chain; its full sequence is 2,3,4,5-tetrahydropyridine-2,6-dicarboxylate N-succinyltransferase (284 aa).

Positions 111 and 148 each coordinate substrate.

The protein belongs to the transferase hexapeptide repeat family. As to quaternary structure, homotrimer.

The protein localises to the cytoplasm. It carries out the reaction (S)-2,3,4,5-tetrahydrodipicolinate + succinyl-CoA + H2O = (S)-2-succinylamino-6-oxoheptanedioate + CoA. Its pathway is amino-acid biosynthesis; L-lysine biosynthesis via DAP pathway; LL-2,6-diaminopimelate from (S)-tetrahydrodipicolinate (succinylase route): step 1/3. The sequence is that of 2,3,4,5-tetrahydropyridine-2,6-dicarboxylate N-succinyltransferase from Ehrlichia ruminantium (strain Gardel).